Consider the following 662-residue polypeptide: Neurexin-2-beta (662 aa).

The span at Met1–Gly10 shows a compositional bias: gly residues. Residues Met1 to Pro27 form a disordered region. An N-terminal signal peptide occupies residues Met1 to Gly46. Residues Ala47–Thr586 are Extracellular-facing. Residues Thr87–Ser295 enclose the Laminin G-like domain. Positions 139 and 156 each coordinate Ca(2+). N-linked (GlcNAc...) asparagine glycosylation occurs at Asn186. Ile238 and Asn240 together coordinate Ca(2+). The O-linked (Xyl...) (heparan sulfate) serine glycan is linked to Ser350. 3 disordered regions span residues Ala408 to Thr458, Leu476 to Ala496, and Leu530 to Pro557. A helical transmembrane segment spans residues Gly587–Met607. Topologically, residues Tyr608–Val662 are cytoplasmic. The tract at residues Asn629 to Val662 is disordered.

The protein belongs to the neurexin family. Interacts (via cytoplasmic C-terminal region) with CASK. Isoform Beta 4b binds alpha-dystroglycan and neuroligins NLGN1, NLGN2 and NLGN3. Interacts with CBLN1, CBLN2 and, less avidly, with CBLN4. Interacts with CLSTN3. Post-translationally, O-glycosylated; contains heparan sulfate. Heparan sulfate attachment is required for synapse development by mediating interactions with neuroligins. As to expression, brain (neuronal synapse).

It localises to the presynaptic cell membrane. In terms of biological role, neuronal cell surface protein that may be involved in cell recognition and cell adhesion. The chain is Neurexin-2-beta (Nrxn2) from Rattus norvegicus (Rat).